The sequence spans 197 residues: uncharacterized protein (197 aa).

It belongs to the NAD(P)H dehydrogenase (quinone) family.

This is an uncharacterized protein from Bacillus subtilis (strain 168).